The following is a 177-amino-acid chain: Large ribosomal subunit protein uL6 (177 aa).

This sequence belongs to the universal ribosomal protein uL6 family. As to quaternary structure, part of the 50S ribosomal subunit.

Its function is as follows. This protein binds to the 23S rRNA, and is important in its secondary structure. It is located near the subunit interface in the base of the L7/L12 stalk, and near the tRNA binding site of the peptidyltransferase center. In Rhizobium johnstonii (strain DSM 114642 / LMG 32736 / 3841) (Rhizobium leguminosarum bv. viciae), this protein is Large ribosomal subunit protein uL6.